Consider the following 353-residue polypeptide: Protein RecA (353 aa).

67–74 lines the ATP pocket; that stretch reads GPESSGKT.

The protein belongs to the RecA family.

It is found in the cytoplasm. Functionally, can catalyze the hydrolysis of ATP in the presence of single-stranded DNA, the ATP-dependent uptake of single-stranded DNA by duplex DNA, and the ATP-dependent hybridization of homologous single-stranded DNAs. It interacts with LexA causing its activation and leading to its autocatalytic cleavage. The protein is Protein RecA of Salmonella agona (strain SL483).